The primary structure comprises 143 residues: Transcriptional regulator MraZ (143 aa).

SpoVT-AbrB domains follow at residues 5-47 and 76-119; these read EYEH…PMPV and ASDL…SAER.

It belongs to the MraZ family. In terms of assembly, forms oligomers.

It localises to the cytoplasm. The protein localises to the nucleoid. This chain is Transcriptional regulator MraZ, found in Herpetosiphon aurantiacus (strain ATCC 23779 / DSM 785 / 114-95).